The sequence spans 613 residues: MPDYRSKTSTHGRNMAGARALWRATGMKDDDFKKPIIAIANSFTQFVPGHVHLKDLGQLVAREIERAGGVAKEFNTIAVDDGIAMGHDGMLYSLPSREIIADSVEYMVNAHCADAIVCISNCDKITPGMLMAALRLNIPVIFVSGGPMEAGKTKLASHGLDLVDAMVIAADSSASDEKVAEYERSACPTCGSCSGMFTANSMNCLVEALGLALPGNGSTLATHSDREQLFLQAGRTIVELCKRYYGENDESVLPRNIANFKAFENAMTLDIAMGGSTNTILHLLAAAQEAEIDFDLRDIDRLSRHVPQLCKVAPNIQKYHMEDVHRAGGIFSILGSLARGGLLHTDLPTVHSKSIAEGIAKWDITQTDDEAVHTFFKAGPAGIPTQTAFSQSTRWDTLDDDRENGCIRSVEHAYSQEGGLAVLYGNIALDGCVVKTAGVDESIHVFEGRAKIYESQDSSVRGILADEVKEGDIVIIRYEGPKGGPGMQEMLYPTSYLKSKGLGKACALLTDGRFSGGTSGLSIGHASPEAAAGGAIGLVQDGDKVLIDIPNRSINLLISDEELAARRVEQDKKGWKPVEKRPRKVTTALKAYALLATSADKGAVRNKAMLDGL.

Aspartate 81 provides a ligand contact to Mg(2+). Cysteine 122 provides a ligand contact to [2Fe-2S] cluster. Mg(2+) contacts are provided by aspartate 123 and lysine 124. Lysine 124 carries the N6-carboxylysine modification. Cysteine 193 provides a ligand contact to [2Fe-2S] cluster. Glutamate 489 contacts Mg(2+). Residue serine 515 is the Proton acceptor of the active site.

It belongs to the IlvD/Edd family. Homodimer. [2Fe-2S] cluster is required as a cofactor. It depends on Mg(2+) as a cofactor.

The catalysed reaction is (2R)-2,3-dihydroxy-3-methylbutanoate = 3-methyl-2-oxobutanoate + H2O. It catalyses the reaction (2R,3R)-2,3-dihydroxy-3-methylpentanoate = (S)-3-methyl-2-oxopentanoate + H2O. Its pathway is amino-acid biosynthesis; L-isoleucine biosynthesis; L-isoleucine from 2-oxobutanoate: step 3/4. The protein operates within amino-acid biosynthesis; L-valine biosynthesis; L-valine from pyruvate: step 3/4. In terms of biological role, functions in the biosynthesis of branched-chain amino acids. Catalyzes the dehydration of (2R,3R)-2,3-dihydroxy-3-methylpentanoate (2,3-dihydroxy-3-methylvalerate) into 2-oxo-3-methylpentanoate (2-oxo-3-methylvalerate) and of (2R)-2,3-dihydroxy-3-methylbutanoate (2,3-dihydroxyisovalerate) into 2-oxo-3-methylbutanoate (2-oxoisovalerate), the penultimate precursor to L-isoleucine and L-valine, respectively. This is Dihydroxy-acid dehydratase from Pseudomonas fluorescens (strain SBW25).